The following is a 361-amino-acid chain: Chorismate synthase (361 aa).

NADP(+) is bound at residue Arg-47. Residues 124 to 126 (RAS), Gly-286, 301 to 305 (KPTAT), and Arg-327 contribute to the FMN site.

The protein belongs to the chorismate synthase family. As to quaternary structure, homotetramer. FMNH2 serves as cofactor.

The enzyme catalyses 5-O-(1-carboxyvinyl)-3-phosphoshikimate = chorismate + phosphate. Its pathway is metabolic intermediate biosynthesis; chorismate biosynthesis; chorismate from D-erythrose 4-phosphate and phosphoenolpyruvate: step 7/7. In terms of biological role, catalyzes the anti-1,4-elimination of the C-3 phosphate and the C-6 proR hydrogen from 5-enolpyruvylshikimate-3-phosphate (EPSP) to yield chorismate, which is the branch point compound that serves as the starting substrate for the three terminal pathways of aromatic amino acid biosynthesis. This reaction introduces a second double bond into the aromatic ring system. In Prochlorococcus marinus (strain NATL2A), this protein is Chorismate synthase.